We begin with the raw amino-acid sequence, 403 residues long: Acetate kinase (403 aa).

Residue Asn-7 coordinates Mg(2+). Lys-14 provides a ligand contact to ATP. Arg-97 contacts substrate. Asp-154 serves as the catalytic Proton donor/acceptor. ATP contacts are provided by residues 213–217 (HLGNG), 287–289 (DMR), and 335–339 (GIGEN). A Mg(2+)-binding site is contributed by Glu-388.

This sequence belongs to the acetokinase family. In terms of assembly, homodimer. Mg(2+) serves as cofactor. Requires Mn(2+) as cofactor.

Its subcellular location is the cytoplasm. It catalyses the reaction acetate + ATP = acetyl phosphate + ADP. Its pathway is metabolic intermediate biosynthesis; acetyl-CoA biosynthesis; acetyl-CoA from acetate: step 1/2. Functionally, catalyzes the formation of acetyl phosphate from acetate and ATP. Can also catalyze the reverse reaction. The protein is Acetate kinase of Synechococcus sp. (strain JA-2-3B'a(2-13)) (Cyanobacteria bacterium Yellowstone B-Prime).